Here is a 359-residue protein sequence, read N- to C-terminus: Photosystem II protein D1 1 (359 aa).

A run of 3 helical transmembrane segments spans residues 29 to 46, 118 to 133, and 142 to 156; these read YVGWFGVLMIPTLLAATT, HFLIGIYAYMGREWEL, and WICIAYSAPVAAASA. His-118 contributes to the chlorophyll a binding site. Tyr-126 is a binding site for pheophytin a. Asp-170 and Glu-189 together coordinate [CaMn4O5] cluster. A helical transmembrane segment spans residues 197-218; the sequence is FHMLGVAGVFGGSLFSAMHGSL. Residue His-198 participates in chlorophyll a binding. A quinone-binding positions include His-215 and 264-265; that span reads SF. Position 215 (His-215) interacts with Fe cation. A Fe cation-binding site is contributed by His-272. The chain crosses the membrane as a helical span at residues 274–288; that stretch reads FLAAWPVVGIWFTAL. Positions 332, 333, 342, and 344 each coordinate [CaMn4O5] cluster. Residues 345–359 constitute a propeptide that is removed on maturation; the sequence is AAESAPVALQAPAIG.

It belongs to the reaction center PufL/M/PsbA/D family. PSII is composed of 1 copy each of membrane proteins PsbA, PsbB, PsbC, PsbD, PsbE, PsbF, PsbH, PsbI, PsbJ, PsbK, PsbL, PsbM, PsbT, PsbX, PsbY, PsbZ, Psb30/Ycf12, peripheral proteins PsbO, CyanoQ (PsbQ), PsbU, PsbV and a large number of cofactors. It forms dimeric complexes. It depends on The D1/D2 heterodimer binds P680, chlorophylls that are the primary electron donor of PSII, and subsequent electron acceptors. It shares a non-heme iron and each subunit binds pheophytin, quinone, additional chlorophylls, carotenoids and lipids. D1 provides most of the ligands for the Mn4-Ca-O5 cluster of the oxygen-evolving complex (OEC). There is also a Cl(-1) ion associated with D1 and D2, which is required for oxygen evolution. The PSII complex binds additional chlorophylls, carotenoids and specific lipids. as a cofactor. Post-translationally, tyr-161 forms a radical intermediate that is referred to as redox-active TyrZ, YZ or Y-Z. C-terminally processed by CtpA; processing is essential to allow assembly of the oxygen-evolving complex and thus photosynthetic growth.

Its subcellular location is the cellular thylakoid membrane. It catalyses the reaction 2 a plastoquinone + 4 hnu + 2 H2O = 2 a plastoquinol + O2. Its function is as follows. Photosystem II (PSII) is a light-driven water:plastoquinone oxidoreductase that uses light energy to abstract electrons from H(2)O, generating O(2) and a proton gradient subsequently used for ATP formation. It consists of a core antenna complex that captures photons, and an electron transfer chain that converts photonic excitation into a charge separation. The D1/D2 (PsbA/PsbD) reaction center heterodimer binds P680, the primary electron donor of PSII as well as several subsequent electron acceptors. In Synechococcus sp. (strain RCC307), this protein is Photosystem II protein D1 1.